The following is a 232-amino-acid chain: 7-cyano-7-deazaguanine synthase (232 aa).

Position 8-18 (8-18) interacts with ATP; that stretch reads FSGGQDSTTCL. Zn(2+)-binding residues include Cys-187, Cys-196, Cys-199, and Cys-202.

Belongs to the QueC family. The cofactor is Zn(2+).

It catalyses the reaction 7-carboxy-7-deazaguanine + NH4(+) + ATP = 7-cyano-7-deazaguanine + ADP + phosphate + H2O + H(+). It functions in the pathway purine metabolism; 7-cyano-7-deazaguanine biosynthesis. Functionally, catalyzes the ATP-dependent conversion of 7-carboxy-7-deazaguanine (CDG) to 7-cyano-7-deazaguanine (preQ(0)). This Vibrio campbellii (strain ATCC BAA-1116) protein is 7-cyano-7-deazaguanine synthase.